Consider the following 298-residue polypeptide: NAD kinase (298 aa).

Aspartate 80 functions as the Proton acceptor in the catalytic mechanism. Residues 80–81, 154–155, arginine 182, aspartate 184, 195–200, alanine 219, and glutamine 253 contribute to the NAD(+) site; these read DG, ND, and TAYALS.

This sequence belongs to the NAD kinase family. Requires a divalent metal cation as cofactor.

Its subcellular location is the cytoplasm. It catalyses the reaction NAD(+) + ATP = ADP + NADP(+) + H(+). Involved in the regulation of the intracellular balance of NAD and NADP, and is a key enzyme in the biosynthesis of NADP. Catalyzes specifically the phosphorylation on 2'-hydroxyl of the adenosine moiety of NAD to yield NADP. The chain is NAD kinase from Acidovorax ebreus (strain TPSY) (Diaphorobacter sp. (strain TPSY)).